The sequence spans 320 residues: Cytosolic Fe-S cluster assembly factor NUBP1 (320 aa).

The residue at position 1 (methionine 1) is an N-acetylmethionine. 4 residues coordinate [4Fe-4S] cluster: cysteine 8, cysteine 22, cysteine 25, and cysteine 31. ATP is bound at residue 62–69 (GKGGVGKS). Residues cysteine 235 and cysteine 238 each coordinate [4Fe-4S] cluster. Position 319 is a phosphoserine (serine 319).

It belongs to the Mrp/NBP35 ATP-binding proteins family. NUBP1/NBP35 subfamily. In terms of assembly, heterotetramer of 2 NUBP1 and 2 NUBP2 chains. Interacts with KIFC1. Interacts with the BBS/CCT complex subunit CCT1. Requires [4Fe-4S] cluster as cofactor.

Its subcellular location is the cytoplasm. The protein localises to the nucleus. It is found in the cell projection. The protein resides in the cytoskeleton. It localises to the cilium axoneme. Its subcellular location is the cilium basal body. The protein localises to the microtubule organizing center. It is found in the centrosome. The protein resides in the centriole. Its function is as follows. Component of the cytosolic iron-sulfur (Fe/S) protein assembly (CIA) machinery. Required for maturation of extramitochondrial Fe-S proteins. The NUBP1-NUBP2 heterotetramer forms a Fe-S scaffold complex, mediating the de novo assembly of an Fe-S cluster and its transfer to target apoproteins. Implicated in the regulation of centrosome duplication. Negatively regulates cilium formation and structure. This Rattus norvegicus (Rat) protein is Cytosolic Fe-S cluster assembly factor NUBP1.